Here is a 149-residue protein sequence, read N- to C-terminus: Nucleoside diphosphate kinase (149 aa).

The ATP site is built by K9, F57, R85, T91, R102, and N112. The active-site Pros-phosphohistidine intermediate is the H115.

This sequence belongs to the NDK family. In terms of assembly, homotetramer. Requires Mg(2+) as cofactor.

It localises to the cytoplasm. The enzyme catalyses a 2'-deoxyribonucleoside 5'-diphosphate + ATP = a 2'-deoxyribonucleoside 5'-triphosphate + ADP. It carries out the reaction a ribonucleoside 5'-diphosphate + ATP = a ribonucleoside 5'-triphosphate + ADP. Its function is as follows. Major role in the synthesis of nucleoside triphosphates other than ATP. The ATP gamma phosphate is transferred to the NDP beta phosphate via a ping-pong mechanism, using a phosphorylated active-site intermediate. The polypeptide is Nucleoside diphosphate kinase (Microcystis aeruginosa (strain NIES-843 / IAM M-2473)).